Consider the following 583-residue polypeptide: Thiol:disulfide interchange protein DsbD (583 aa).

Positions 1-18 are cleaved as a signal peptide; the sequence is MRRLFLLLFMLFTTLAHA. 2 cysteine pairs are disulfide-bonded: cysteine 118–cysteine 124 and cysteine 186–cysteine 306. 8 helical membrane passes run 168-188, 214-234, 245-265, 289-309, 326-346, 359-379, 382-402, and 413-433; these read GLGL…PCSL, SYVL…ALLG, WVLG…FGFF, LIGC…CMTA, FGGL…LLLV, WMNL…IYML, VLNP…VAYC, and LLHL…MLLV. A Thioredoxin domain is found at 458 to 581; that stretch reads VTAHDAFTTV…FLQRWTQTRE (124 aa). Cysteine 496 and cysteine 499 form a disulfide bridge.

The protein belongs to the thioredoxin family. DsbD subfamily.

The protein resides in the cell inner membrane. The catalysed reaction is [protein]-dithiol + NAD(+) = [protein]-disulfide + NADH + H(+). It carries out the reaction [protein]-dithiol + NADP(+) = [protein]-disulfide + NADPH + H(+). Functionally, required to facilitate the formation of correct disulfide bonds in some periplasmic proteins and for the assembly of the periplasmic c-type cytochromes. Acts by transferring electrons from cytoplasmic thioredoxin to the periplasm. This transfer involves a cascade of disulfide bond formation and reduction steps. In Pseudomonas fluorescens (strain ATCC BAA-477 / NRRL B-23932 / Pf-5), this protein is Thiol:disulfide interchange protein DsbD.